We begin with the raw amino-acid sequence, 954 residues long: MTDRIELTTANEFIARHIGPRAADEQAMLQTLGFDSIEALSESVIPESIKGTSVLNLPAGQSEADALASIKAIASKNQLFKTYIGQGYYNTHTPAPILRNLLENPAWYTAYTPYQPEISQGRLESLLNFQTLISDLTGLPIANASLLDEATAAAEAMTFCKRLSKNKGSQQFFASSHCHPQTLDVLRTRAEPLGITVVVADEAELGDVSDYFGALLQYPASNGDVFDYRELVERFHAANALVAVAADLLALTLLTPPGEFGADVAIGSAQRFGVPLGFGGPHAAYFSTRDAFKRDMPGRLVGVSVDRHGKQALRLAMQTREQHIRREKATSNICTAQVLLANIASMYAVYHGPRGLTQIAKRVHQLTAILAEGLSTLGLKAEQAFFFDSLTLNTGSRTAALHAAARARHINLREIDDQHLGLSLDETTSQSAVETLWEIFASDGQNLPDFTALAASVPSRLPATLLRQSAILSHPVFNRYHSETELMRYLRKLADKDLALDRTMIPLGSCTMKLNAASEMIPVTWAEFGNLHPFAPAEQSTGYQQLTDELEAMLCAATGYDAISLQPNAGSQGEYAGLLAIRAYHQSRGDEHRDICLIPSSAHGTNPATANMAGMRVVVTACDARGNVDIEDLRAKTVQHRDQLAAIMITYPSTHGVFEEGIREICGIVHDNGGQVYIDGANMNAMVGLCAPGKFGGDVSHLNLHKTFCIPHGGGGPGVGPIGVKSHLAPFMPGHARMERKEGAVCAAPFGSASILPITWMYIRMMGGEGLKRASQLAILNANYISRRLEEHYPVLYTGTNGLVAHECILDLRPIKDSSGISVDDVAKRLIDFGFHAPTMSFPVAGTLMIEPTESESREELDRFCDAMIKIREEIRAVENGTLDKDDNPLKNAPHTAAEIVGQWSHPYSREQAVYPVDSLIENKYWPPVGRVDNVFGDRNLVCACPSIESYQEA.

Lysine 706 is subject to N6-(pyridoxal phosphate)lysine.

It belongs to the GcvP family. The glycine cleavage system is composed of four proteins: P, T, L and H. Pyridoxal 5'-phosphate is required as a cofactor.

It catalyses the reaction N(6)-[(R)-lipoyl]-L-lysyl-[glycine-cleavage complex H protein] + glycine + H(+) = N(6)-[(R)-S(8)-aminomethyldihydrolipoyl]-L-lysyl-[glycine-cleavage complex H protein] + CO2. In terms of biological role, the glycine cleavage system catalyzes the degradation of glycine. The P protein binds the alpha-amino group of glycine through its pyridoxal phosphate cofactor; CO(2) is released and the remaining methylamine moiety is then transferred to the lipoamide cofactor of the H protein. The polypeptide is Glycine dehydrogenase (decarboxylating) (Pseudomonas savastanoi pv. phaseolicola (strain 1448A / Race 6) (Pseudomonas syringae pv. phaseolicola (strain 1448A / Race 6))).